We begin with the raw amino-acid sequence, 692 residues long: Serine/threonine-protein phosphatase PP-Z1 (692 aa).

Disordered stretches follow at residues methionine 1 to asparagine 309 and glutamate 321 to phenylalanine 357. A lipid anchor (N-myristoyl glycine) is attached at glycine 2. 3 stretches are compositionally biased toward low complexity: residues serine 32–asparagine 41, serine 49–serine 69, and serine 91–serine 122. Serine 49 carries the post-translational modification Phosphoserine. Acidic residues predominate over residues leucine 170–aspartate 179. Position 171 is a phosphothreonine (threonine 171). Over residues arginine 190 to valine 204 the composition is skewed to low complexity. Basic and acidic residues predominate over residues arginine 207–proline 216. 2 positions are modified to phosphoserine: serine 209 and serine 222. 2 stretches are compositionally biased toward polar residues: residues asparagine 217–tyrosine 229 and phenylalanine 251–glycine 267. The residue at position 261 (threonine 261) is a Phosphothreonine. Phosphoserine is present on serine 265. Residues threonine 280–histidine 289 show a composition bias toward low complexity. Positions serine 291–asparagine 303 are enriched in basic and acidic residues. Over residues glutamate 321–threonine 331 the composition is skewed to polar residues. The Mn(2+) site is built by aspartate 419, histidine 421, aspartate 447, and asparagine 479. The Proton donor role is filled by histidine 480. Mn(2+) contacts are provided by histidine 528 and histidine 603. Positions leucine 672–glutamine 692 are disordered. The segment covering alanine 673–glutamine 692 has biased composition (polar residues). A Phosphoserine modification is found at serine 690.

This sequence belongs to the PPP phosphatase family. PP-Z subfamily. As to quaternary structure, interacts with SIS2 and VHS3, which regulate its activity. Requires Mn(2+) as cofactor.

It carries out the reaction O-phospho-L-seryl-[protein] + H2O = L-seryl-[protein] + phosphate. The catalysed reaction is O-phospho-L-threonyl-[protein] + H2O = L-threonyl-[protein] + phosphate. Inhibited by the regulatory subunits VHS3 and SIS2. In terms of biological role, essential for the maintenance of cell size and integrity in response to osmotic stress. This Saccharomyces cerevisiae (strain ATCC 204508 / S288c) (Baker's yeast) protein is Serine/threonine-protein phosphatase PP-Z1 (PPZ1).